Consider the following 147-residue polypeptide: Large ribosomal subunit protein uL16 (147 aa).

This sequence belongs to the universal ribosomal protein uL16 family. Part of the 50S ribosomal subunit.

Binds 23S rRNA and is also seen to make contacts with the A and possibly P site tRNAs. The protein is Large ribosomal subunit protein uL16 of Caldicellulosiruptor bescii (strain ATCC BAA-1888 / DSM 6725 / KCTC 15123 / Z-1320) (Anaerocellum thermophilum).